The following is a 179-amino-acid chain: MSHLTVYRDDDPDDIVLRTDDAAVIADALRGIGARFERWDSPVVPPLDATPDAVLNTYRPYLDELMGETGAGSADVVRINAATPNLTALRDKFLSEHTHSEDEVRFFVHGSGNFVLHVDGRVYDVCCTAGDLISVPRGTPHWFDAGLSPDVVALRVFTDTTGWIADYTGDDIARRFPVS.

Positions 97, 99, 103, and 141 each coordinate Fe(2+). 4 residues coordinate Ni(2+): His-97, His-99, Glu-103, and His-141.

It belongs to the acireductone dioxygenase (ARD) family. Monomer. Fe(2+) serves as cofactor. The cofactor is Ni(2+).

It carries out the reaction 1,2-dihydroxy-5-(methylsulfanyl)pent-1-en-3-one + O2 = 3-(methylsulfanyl)propanoate + CO + formate + 2 H(+). The catalysed reaction is 1,2-dihydroxy-5-(methylsulfanyl)pent-1-en-3-one + O2 = 4-methylsulfanyl-2-oxobutanoate + formate + 2 H(+). The protein operates within amino-acid biosynthesis; L-methionine biosynthesis via salvage pathway; L-methionine from S-methyl-5-thio-alpha-D-ribose 1-phosphate: step 5/6. Catalyzes 2 different reactions between oxygen and the acireductone 1,2-dihydroxy-3-keto-5-methylthiopentene (DHK-MTPene) depending upon the metal bound in the active site. Fe-containing acireductone dioxygenase (Fe-ARD) produces formate and 2-keto-4-methylthiobutyrate (KMTB), the alpha-ketoacid precursor of methionine in the methionine recycle pathway. Ni-containing acireductone dioxygenase (Ni-ARD) produces methylthiopropionate, carbon monoxide and formate, and does not lie on the methionine recycle pathway. This is Acireductone dioxygenase from Gluconacetobacter diazotrophicus (strain ATCC 49037 / DSM 5601 / CCUG 37298 / CIP 103539 / LMG 7603 / PAl5).